A 250-amino-acid chain; its full sequence is Probable transcriptional regulatory protein Lferr_0060 (250 aa).

It belongs to the TACO1 family.

It localises to the cytoplasm. The protein is Probable transcriptional regulatory protein Lferr_0060 of Acidithiobacillus ferrooxidans (strain ATCC 53993 / BNL-5-31) (Leptospirillum ferrooxidans (ATCC 53993)).